The following is a 364-amino-acid chain: Alanine racemase (364 aa).

The active-site Proton acceptor; specific for D-alanine is the Lys-34. Lys-34 carries the post-translational modification N6-(pyridoxal phosphate)lysine. Arg-129 provides a ligand contact to substrate. Tyr-259 serves as the catalytic Proton acceptor; specific for L-alanine. A substrate-binding site is contributed by Met-307.

It belongs to the alanine racemase family. Pyridoxal 5'-phosphate is required as a cofactor.

It carries out the reaction L-alanine = D-alanine. It participates in amino-acid biosynthesis; D-alanine biosynthesis; D-alanine from L-alanine: step 1/1. Functionally, catalyzes the interconversion of L-alanine and D-alanine. May also act on other amino acids. This is Alanine racemase (alr) from Coxiella burnetii (strain RSA 331 / Henzerling II).